The primary structure comprises 384 residues: tRNA 2-selenouridine synthase (384 aa).

Positions 15–138 (FVAGKPLIDL…MRQYLIGVIE (124 aa)) constitute a Rhodanese domain. Cysteine 98 (S-selanylcysteine intermediate) is an active-site residue.

This sequence belongs to the SelU family. In terms of assembly, monomer.

It catalyses the reaction 5-methylaminomethyl-2-thiouridine(34) in tRNA + selenophosphate + (2E)-geranyl diphosphate + H2O + H(+) = 5-methylaminomethyl-2-selenouridine(34) in tRNA + (2E)-thiogeraniol + phosphate + diphosphate. It carries out the reaction 5-methylaminomethyl-2-thiouridine(34) in tRNA + (2E)-geranyl diphosphate = 5-methylaminomethyl-S-(2E)-geranyl-thiouridine(34) in tRNA + diphosphate. The catalysed reaction is 5-methylaminomethyl-S-(2E)-geranyl-thiouridine(34) in tRNA + selenophosphate + H(+) = 5-methylaminomethyl-2-(Se-phospho)selenouridine(34) in tRNA + (2E)-thiogeraniol. The enzyme catalyses 5-methylaminomethyl-2-(Se-phospho)selenouridine(34) in tRNA + H2O = 5-methylaminomethyl-2-selenouridine(34) in tRNA + phosphate. Involved in the post-transcriptional modification of the uridine at the wobble position (U34) of tRNA(Lys), tRNA(Glu) and tRNA(Gln). Catalyzes the conversion of 2-thiouridine (S2U-RNA) to 2-selenouridine (Se2U-RNA). Acts in a two-step process involving geranylation of 2-thiouridine (S2U) to S-geranyl-2-thiouridine (geS2U) and subsequent selenation of the latter derivative to 2-selenouridine (Se2U) in the tRNA chain. In Shewanella sp. (strain MR-4), this protein is tRNA 2-selenouridine synthase.